We begin with the raw amino-acid sequence, 443 residues long: Protein PRRC1 (443 aa).

The tract at residues 1 to 165 is disordered; sequence MMEESGIETT…FSAPPVTGIL (165 aa). Residues 29–45 are compositionally biased toward polar residues; the sequence is EAHSAATSSFSSPNVSG. The segment covering 59–72 has biased composition (pro residues); sequence PSLPPVQPSAPPPF. Composition is skewed to low complexity over residues 81 to 96 and 109 to 134; these read VPLSGTSVPPSVSPSP and PPATSASGALLSAPPSGPPISGFSVG. Serine 406 carries the phosphoserine modification.

It belongs to the PRRC1 family. As to quaternary structure, interacts with PRKAR1A; resulting in PKA activation.

It is found in the golgi apparatus. The protein localises to the cytoplasm. Its function is as follows. May act as a regulator of the protein kinase A (PKA) during embryonic development. The protein is Protein PRRC1 (Prrc1) of Mus musculus (Mouse).